The primary structure comprises 246 residues: Bis(5'-nucleosyl)-tetraphosphatase PrpE [asymmetrical] (246 aa).

This sequence belongs to the PrpE family. Requires Ni(2+) as cofactor.

The catalysed reaction is P(1),P(4)-bis(5'-guanosyl) tetraphosphate + H2O = GMP + GTP + 2 H(+). Asymmetrically hydrolyzes Ap4p to yield AMP and ATP. The chain is Bis(5'-nucleosyl)-tetraphosphatase PrpE [asymmetrical] from Bacillus cereus (strain AH820).